Here is a 561-residue protein sequence, read N- to C-terminus: Acyl-CoA ligase frbB (561 aa).

ATP-binding positions include 213-221, 354-359, Asp437, Arg456, and Lys551; these read TSGTSGAQK and PGWGLT. An SBD1 region spans residues 284–354; that stretch reads DLKRVLGSIA…TLRPKWHLQP (71 aa). Residues 355–417 are SBD2; sequence GWGLTEGGGA…MKSPSVIAGY (63 aa).

The protein belongs to the ATP-dependent AMP-binding enzyme family.

Its pathway is antifungal biosynthesis. Acyl-CoA ligase; part of the gene cluster that mediates the biosynthesis of the antifungal antibiotic FR901469, an inhibitor of beta-1,3-glucansynthase, exerting antifungal activity against the pathogenes Candida albicans and Aspergillus fumigatus. FR901469 is a cyclic depsipeptide containing 12 amino acid residues and a fatty acid chain. The NRPS frbI contains 12 modules responsible for the formation of the depsipeptide backbone which is denoted as Acyl-Thr-Ala-Tyr-Val-4OHPro-Thr-Thr-3OHPro-threo3OHGln-Gly-Thr-Orn-OH (C71H116N14O23). The PKS frbB is probably involved in the production of the hydrocarbon chain, and the acyl-CoA ligase frbC might be involved in the transport of the chain to the peptide ptoduct of frbI. Because FR901469 contains 3 hydroxylated amino acid residues, the 3 oxygenases frbA, frbH, and frbJ might be participating in amino acid hydroxylation. As no thioesterase domains were detected in frbI or frbB, the thioesterases frbD and frbE may instead release and cyclize the products of the NRPS and PKS, respectively. The sequence is that of Acyl-CoA ligase frbB from Dothideomycetidae sp. (strain 11243) (Fungal sp. (strain No.11243)).